The chain runs to 356 residues: Phosphoribosylformylglycinamidine cyclo-ligase (356 aa).

Belongs to the AIR synthase family.

The protein resides in the cytoplasm. The catalysed reaction is 2-formamido-N(1)-(5-O-phospho-beta-D-ribosyl)acetamidine + ATP = 5-amino-1-(5-phospho-beta-D-ribosyl)imidazole + ADP + phosphate + H(+). The protein operates within purine metabolism; IMP biosynthesis via de novo pathway; 5-amino-1-(5-phospho-D-ribosyl)imidazole from N(2)-formyl-N(1)-(5-phospho-D-ribosyl)glycinamide: step 2/2. This chain is Phosphoribosylformylglycinamidine cyclo-ligase, found in Desulfotalea psychrophila (strain LSv54 / DSM 12343).